The following is an 84-amino-acid chain: Putative membrane protein insertion efficiency factor (84 aa).

This sequence belongs to the UPF0161 family.

Its subcellular location is the cell inner membrane. Its function is as follows. Could be involved in insertion of integral membrane proteins into the membrane. The protein is Putative membrane protein insertion efficiency factor of Shewanella loihica (strain ATCC BAA-1088 / PV-4).